The sequence spans 403 residues: Cysteine desulfurase IscS (403 aa).

Pyridoxal 5'-phosphate is bound by residues 75-76 (AT), N155, Q183, and 203-205 (SAH). K206 is modified (N6-(pyridoxal phosphate)lysine). T243 serves as a coordination point for pyridoxal 5'-phosphate. The Cysteine persulfide intermediate role is filled by C328. C328 contributes to the [2Fe-2S] cluster binding site.

It belongs to the class-V pyridoxal-phosphate-dependent aminotransferase family. NifS/IscS subfamily. In terms of assembly, homodimer. Forms a heterotetramer with IscU, interacts with other sulfur acceptors. The cofactor is pyridoxal 5'-phosphate.

It localises to the cytoplasm. The enzyme catalyses (sulfur carrier)-H + L-cysteine = (sulfur carrier)-SH + L-alanine. Its pathway is cofactor biosynthesis; iron-sulfur cluster biosynthesis. In terms of biological role, master enzyme that delivers sulfur to a number of partners involved in Fe-S cluster assembly, tRNA modification or cofactor biosynthesis. Catalyzes the removal of elemental sulfur atoms from cysteine to produce alanine. Functions as a sulfur delivery protein for Fe-S cluster synthesis onto IscU, an Fe-S scaffold assembly protein, as well as other S acceptor proteins. This Psychromonas ingrahamii (strain DSM 17664 / CCUG 51855 / 37) protein is Cysteine desulfurase IscS.